The sequence spans 353 residues: MSSSPTTVGVVFGGCSGEHDVSIRSAQTVAKGLTLGANRERYRVVLVYIDRDGRWWGPDLAGKVLSSGCPPADSDLPQPLPAPGFRGLPAGTDVVAVWYPVLHGPNGEDGTIQGLFELMQQPYVGAGVLGSAVSMDKQAMKAALAGAGLAQVPYVCAQADELSDAARQEALLKRIESGLCYPCFIKPANLGSSVGISKARNREELIHGLRLAATLDPRLVVEQGVQARELECAVLGGTTLRASVVGEVRFDADWYDYETKYTDGRSTTLIPAPLPDGIVEAIRSQSIQACAAVGVTGMARVDFFYDDSRDRVWLNEINTLPGFTSQSMYPMLWEASGVTLEQLVHELLESAGQ.

The region spanning 141 to 349 (KAALAGAGLA…LEQLVHELLE (209 aa)) is the ATP-grasp domain. 176 to 231 (ESGLCYPCFIKPANLGSSVGISKARNREELIHGLRLAATLDPRLVVEQGVQARELE) lines the ATP pocket. Mg(2+) contacts are provided by Asp302, Glu316, and Asn318.

This sequence belongs to the D-alanine--D-alanine ligase family. Requires Mg(2+) as cofactor. It depends on Mn(2+) as a cofactor.

The protein resides in the cytoplasm. The catalysed reaction is 2 D-alanine + ATP = D-alanyl-D-alanine + ADP + phosphate + H(+). It participates in cell wall biogenesis; peptidoglycan biosynthesis. In terms of biological role, cell wall formation. In Parasynechococcus marenigrum (strain WH8102), this protein is D-alanine--D-alanine ligase.